The sequence spans 425 residues: RNA polymerase II-associated factor 1 homolog (425 aa).

Positions K152–T174 form a coiled coil. The interval S331–D425 is disordered. Composition is skewed to basic and acidic residues over residues S344 to G380 and D393 to S402.

The protein belongs to the PAF1 family. Component of the PAF1 complex which consists of at least cdc-73, ctr-9, leo-1, pafo-1 and rtfo-1.

It is found in the nucleus. Component of the PAF1 complex which is a multifunctional complex involved in transcription initiation via genetic interactions with TATA-binding proteins, elongation and transcription-coupled histone modification. The chain is RNA polymerase II-associated factor 1 homolog from Caenorhabditis elegans.